The sequence spans 625 residues: Transferrin-binding protein B (625 aa).

An N-terminal signal peptide occupies residues 1 to 17 (MKSVPLISGGLSLFLSA). C18 carries N-palmitoyl cysteine lipidation. A lipid anchor (S-diacylglycerol cysteine) is attached at C18. 4 disordered regions span residues 25-52 (FDVD…KKSN), 99-125 (KKEN…QNHH), 275-298 (VKPT…GGFY), and 584-610 (FTYN…KARA). Over residues 276-292 (KPTEKDSEEHPFTREGT) the composition is skewed to basic and acidic residues. Residues 587 to 605 (NGKNPTDKNSPTASSPSNS) show a composition bias toward polar residues.

Belongs to the TbpB family.

It is found in the cell outer membrane. The protein localises to the cell surface. In terms of biological role, haemophilus acquires iron by extracting it from serum transferrin (TF) in its human host. Acts as a transferrin receptor and is required for transferrin utilization. The protein is Transferrin-binding protein B (tbpB) of Haemophilus influenzae (strain ATCC 51907 / DSM 11121 / KW20 / Rd).